The primary structure comprises 305 residues: Formamidopyrimidine-DNA glycosylase (305 aa).

Proline 2 serves as the catalytic Schiff-base intermediate with DNA. Catalysis depends on glutamate 3, which acts as the Proton donor. Lysine 59 serves as the catalytic Proton donor; for beta-elimination activity. Histidine 92, arginine 111, and arginine 154 together coordinate DNA. The FPG-type zinc-finger motif lies at 239-273; that stretch reads QVFDRAGEPCPVCGTPIRKVAVAQRGTHFCPRCQP. The Proton donor; for delta-elimination activity role is filled by arginine 263. Positions 282 to 305 are disordered; it reads PRRARPGRRGNSVRVAAEPPGTYE.

The protein belongs to the FPG family. In terms of assembly, monomer. It depends on Zn(2+) as a cofactor.

The catalysed reaction is Hydrolysis of DNA containing ring-opened 7-methylguanine residues, releasing 2,6-diamino-4-hydroxy-5-(N-methyl)formamidopyrimidine.. The enzyme catalyses 2'-deoxyribonucleotide-(2'-deoxyribose 5'-phosphate)-2'-deoxyribonucleotide-DNA = a 3'-end 2'-deoxyribonucleotide-(2,3-dehydro-2,3-deoxyribose 5'-phosphate)-DNA + a 5'-end 5'-phospho-2'-deoxyribonucleoside-DNA + H(+). Involved in base excision repair of DNA damaged by oxidation or by mutagenic agents. Acts as a DNA glycosylase that recognizes and removes damaged bases. Has a preference for oxidized purines, such as 7,8-dihydro-8-oxoguanine (8-oxoG). Has AP (apurinic/apyrimidinic) lyase activity and introduces nicks in the DNA strand. Cleaves the DNA backbone by beta-delta elimination to generate a single-strand break at the site of the removed base with both 3'- and 5'-phosphates. This is Formamidopyrimidine-DNA glycosylase from Symbiobacterium thermophilum (strain DSM 24528 / JCM 14929 / IAM 14863 / T).